Here is a 340-residue protein sequence, read N- to C-terminus: Tetraacyldisaccharide 4'-kinase (340 aa).

ATP is bound at residue 51–58 (HMGGAGKT).

The protein belongs to the LpxK family.

It carries out the reaction a lipid A disaccharide + ATP = a lipid IVA + ADP + H(+). It participates in glycolipid biosynthesis; lipid IV(A) biosynthesis; lipid IV(A) from (3R)-3-hydroxytetradecanoyl-[acyl-carrier-protein] and UDP-N-acetyl-alpha-D-glucosamine: step 6/6. Transfers the gamma-phosphate of ATP to the 4'-position of a tetraacyldisaccharide 1-phosphate intermediate (termed DS-1-P) to form tetraacyldisaccharide 1,4'-bis-phosphate (lipid IVA). The sequence is that of Tetraacyldisaccharide 4'-kinase from Rhodopseudomonas palustris (strain ATCC BAA-98 / CGA009).